Here is a 443-residue protein sequence, read N- to C-terminus: Putative type II methyltransferase M.BsuMIIP (443 aa).

The 437-residue stretch at 4–440 (LRVMSLFSGI…QELIHTYVNK (437 aa)) folds into the SAM-dependent MTase C5-type domain. C78 is an active-site residue.

This sequence belongs to the class I-like SAM-binding methyltransferase superfamily. C5-methyltransferase family.

It catalyses the reaction a 2'-deoxycytidine in DNA + S-adenosyl-L-methionine = a 5-methyl-2'-deoxycytidine in DNA + S-adenosyl-L-homocysteine + H(+). Its function is as follows. A putative methylase, recognizes the double-stranded sequence 5'-GGCC-3', methylates C-?. There is no known cognate restriction enzyme. This chain is Putative type II methyltransferase M.BsuMIIP (mtbP), found in Bacillus subtilis (strain 168).